The sequence spans 122 residues: HLLQFRKMIKKMTGKEPIVSYAFYGCYCGKGGRGKPKDATDRCCFVHDCCYEKVTGCDPKWSYYTYSLENGDIVCGGDPYCTKVKCECDKKAAICFRDNLKTYKNRYMTFPDIFCTDPTEGC.

7 disulfides stabilise this stretch: Cys26/Cys115, Cys28/Cys44, Cys43/Cys95, Cys49/Cys122, Cys50/Cys88, Cys57/Cys81, and Cys75/Cys86. Positions 27, 29, and 31 each coordinate Ca(2+). Residue His47 is part of the active site. Asp48 is a Ca(2+) binding site. The active site involves Asp89.

This sequence belongs to the phospholipase A2 family. Group II subfamily. D49 sub-subfamily. Ca(2+) serves as cofactor. Expressed by the venom gland.

Its subcellular location is the secreted. It carries out the reaction a 1,2-diacyl-sn-glycero-3-phosphocholine + H2O = a 1-acyl-sn-glycero-3-phosphocholine + a fatty acid + H(+). In terms of biological role, PLA2 catalyzes the calcium-dependent hydrolysis of the 2-acyl groups in 3-sn-phosphoglycerides. This chain is Basic phospholipase A2 PL-X, found in Protobothrops flavoviridis (Habu).